Consider the following 400-residue polypeptide: Exodeoxyribonuclease 7 large subunit (400 aa).

It belongs to the XseA family. In terms of assembly, heterooligomer composed of large and small subunits.

It localises to the cytoplasm. It carries out the reaction Exonucleolytic cleavage in either 5'- to 3'- or 3'- to 5'-direction to yield nucleoside 5'-phosphates.. Bidirectionally degrades single-stranded DNA into large acid-insoluble oligonucleotides, which are then degraded further into small acid-soluble oligonucleotides. This Clostridium perfringens (strain 13 / Type A) protein is Exodeoxyribonuclease 7 large subunit.